A 653-amino-acid polypeptide reads, in one-letter code: Sulfate transporter 1.2 (653 aa).

The interval 1 to 30 is disordered; it reads MSSRAHPVDGSPATDGGHVPMKPSPTRHKV. Over 1-91 the chain is Cytoplasmic; it reads MSSRAHPVDG…GRNYTFKKFR (91 aa). Residues 92–112 traverse the membrane as a helical segment; sequence GDLISGLTIASLCIPQDIGYA. Over 113–116 the chain is Extracellular; the sequence is KLAN. The helical transmembrane segment at 117-137 threads the bilayer; sequence LDPKYGLYSSFVPPLVYACMG. Residues 138 to 141 lie on the Cytoplasmic side of the membrane; sequence SSRD. Residues 142-162 traverse the membrane as a helical segment; the sequence is IAIGPVAVVSLLLGTLLRAEI. Topologically, residues 163–173 are extracellular; sequence DPNTSPDEYLR. The next 2 membrane-spanning stretches (helical) occupy residues 174–194 and 195–215; these read LAFT…FFRL and GFLI…GAAI. Residues 216 to 253 lie on the Extracellular side of the membrane; the sequence is TIALQQLKGFLGIKKFTKKTDIISVLESVFKAAHHGWN. A helical membrane pass occupies residues 254-274; it reads WQTILIGASFLTFLLTSKIIG. The Cytoplasmic portion of the chain corresponds to 275 to 280; it reads KKSKKL. Residues 281 to 301 form a helical membrane-spanning segment; the sequence is FWVPAIAPLISVIVSTFFVYI. Over 302–339 the chain is Extracellular; sequence TRADKQGVQIVKHLDQGINPSSFHLIYFTGDNLAKGIR. The helical transmembrane segment at 340 to 360 threads the bilayer; sequence IGVVAGMVALTEAVAIGRTFA. At 361–372 the chain is on the cytoplasmic side; sequence AMKDYQIDGNKE. A helical transmembrane segment spans residues 373-393; sequence MVALGMMNVVGSMSSCYVATG. The Extracellular segment spans residues 394–409; it reads SFSRSAVNFMAGCQTA. Residues 410 to 430 form a helical membrane-spanning segment; the sequence is VSNIIMSIVVLLTLLFLTPLF. Topologically, residues 431-438 are cytoplasmic; it reads KYTPNAIL. A helical membrane pass occupies residues 439–459; it reads AAIIINAVIPLIDIQAAILIF. Topologically, residues 460–466 are extracellular; that stretch reads KVDKLDF. A helical membrane pass occupies residues 467–487; that stretch reads IACIGAFFGVIFVSVEIGLLI. Over 488-653 the chain is Cytoplasmic; sequence AVSISFAKIL…ACCPKLSNEV (166 aa). The region spanning 522–645 is the STAS domain; sequence QYPEATMVPG…LTVADAVEAC (124 aa).

Belongs to the SLC26A/SulP transporter (TC 2.A.53.1) family. In terms of assembly, homodimer. Interacts with OASA1 through its STAS domain. In terms of tissue distribution, expressed in lateral root cap, root hairs, epidermal and cortical cells of roots.

It localises to the cell membrane. Interaction with OASA1 negatively impacts the transporter activity. Its function is as follows. High-affinity H(+)/sulfate cotransporter that mediates the uptake of the environmental sulfate by plant roots. Plays a central role in the regulation of sulfate assimilation. Unable to transport molybdate. This Arabidopsis thaliana (Mouse-ear cress) protein is Sulfate transporter 1.2 (SULTR1;2).